Consider the following 671-residue polypeptide: Solute carrier family 5 member 4 (671 aa).

Topologically, residues 1–38 (MPAMGTALPRAMASTASVSTSTGSSELSSLSDNINNPA) are cytoplasmic. Residues 39-59 (DISVIVIYFVVVMAVGVWAMV) form a helical membrane-spanning segment. The Extracellular portion of the chain corresponds to 60–65 (KTNRST). A helical transmembrane segment spans residues 66 to 86 (VGGFFLAGRSMTWWPMGASLF). The Cytoplasmic segment spans residues 87-89 (ASN). Residues 90–110 (IGSGHFVGLAGTGAATGIAVT) form a helical membrane-spanning segment. The Extracellular segment spans residues 111–116 (AFESHS). Residues 117–137 (FALLLVLGWFFVPIYIKAGVM) form a helical membrane-spanning segment. Topologically, residues 138–159 (TMPEYLRKRFGGKRLQIYLSVL) are cytoplasmic. Residues 160-180 (SLFICVILTISADIFSGAIFI) form a helical membrane-spanning segment. Residue Lys-181 is a topological domain, extracellular. Residues 182-202 (LALGLDLYLAIFILLAITAVF) traverse the membrane as a helical segment. Residues 203 to 218 (TITGGLASVIYTDTLQ) are Cytoplasmic-facing. Residues 219–239 (AIIMLVGSFILMIYAFVEVGG) form a helical membrane-spanning segment. Residues 240-288 (YESFTEKYMNAIPSVVEGDNLTISPKCYTPQPDSFHIFRDAVTGDIPWP) lie on the Extracellular side of the membrane. The helical transmembrane segment at 289 to 309 (GTAFGMPITALWYWCINQVIV) threads the bilayer. The Cytoplasmic segment spans residues 310-324 (QRCLCGKNMSHVKAA). A helical membrane pass occupies residues 325–345 (CIVCGYLKLLPIFFMVMPGMI). The Extracellular segment spans residues 346 to 378 (SRILYTDMVACVVPSECVKQCGVDVGCTNYAYP). The helical transmembrane segment at 379–399 (MLVLKLMPMGLRGLMLSVMLA) threads the bilayer. Residues 400 to 434 (SLMSSLTSIFNSASTLFTMDLYTKIRKKASERELL) lie on the Cytoplasmic side of the membrane. Residues 435–455 (IAGRLFVSVLIVTSILWVPIV) form a helical membrane-spanning segment. Residues 456-467 (EVSQGGQLIHYT) are Extracellular-facing. A helical membrane pass occupies residues 468 to 488 (EAISSYLGPPIAAVFLVAIFC). The Cytoplasmic segment spans residues 489-494 (KRVNEQ). The chain crosses the membrane as a helical span at residues 495 to 515 (GAFWGLMVGLVLGLIRMIAEF). Topologically, residues 516-537 (SYGTGSCLAPSSCPKVICGVHY) are extracellular. The helical transmembrane segment at 538–558 (LYYAIILFFVSILVILGVSYL) threads the bilayer. The Cytoplasmic portion of the chain corresponds to 559–650 (TKPIPDVHLY…DTSEKPFWRT (92 aa)). The segment covering 583 to 593 (DLDAEDREENE) has biased composition (acidic residues). The tract at residues 583–604 (DLDAEDREENEADARTEEDQTE) is disordered. Basic and acidic residues predominate over residues 594–604 (ADARTEEDQTE). A helical transmembrane segment spans residues 651–671 (VVNVNVIVLLAVAAFFYGYFA).

This sequence belongs to the sodium:solute symporter (SSF) (TC 2.A.21) family.

Its subcellular location is the cell membrane. Its function is as follows. Generates D-glucose-induced depolarization in a pH-dependent and Na(+)-independent manner, with activity in acidic conditions (pH 5) but not neutral conditions. The chain is Solute carrier family 5 member 4 from Rattus norvegicus (Rat).